The following is a 459-amino-acid chain: Protoheme IX farnesyltransferase (459 aa).

Positions 1–184 (MSRNTATQFV…AYVQLMKPRL (184 aa)) are unknown. 12 consecutive transmembrane segments (helical) span residues 9–29 (FVAV…LGAT), 66–86 (AAAL…RTGA), 93–113 (AVTL…YTAM), 123–143 (VHLT…AWTL), 184–204 (LMWL…SQLG), 211–231 (AATV…SGTF), 262–282 (LAFG…VNLL), 284–304 (AVLG…VLKP), 325–345 (WVAV…VIFL), 382–402 (HIVY…ELTG), 403–423 (LGPL…YFAI), and 438–458 (FHAS…DTMV). Residues 185-459 (MWLLCLVAGA…VAVVLDTMVV (275 aa)) are protoheme IX prenyltransferase.

In the C-terminal section; belongs to the UbiA prenyltransferase family. Protoheme IX farnesyltransferase subfamily.

It localises to the cell membrane. The catalysed reaction is heme b + (2E,6E)-farnesyl diphosphate + H2O = Fe(II)-heme o + diphosphate. It participates in porphyrin-containing compound metabolism; heme O biosynthesis; heme O from protoheme: step 1/1. Functionally, converts heme B (protoheme IX) to heme O by substitution of the vinyl group on carbon 2 of heme B porphyrin ring with a hydroxyethyl farnesyl side group. This chain is Protoheme IX farnesyltransferase (ctaB), found in Halobacterium salinarum (strain ATCC 29341 / DSM 671 / R1).